The chain runs to 292 residues: Pyridoxal 5'-phosphate synthase subunit PdxS (292 aa).

Aspartate 22 is a D-ribose 5-phosphate binding site. Lysine 79 (schiff-base intermediate with D-ribose 5-phosphate) is an active-site residue. Glycine 151 lines the D-ribose 5-phosphate pocket. D-glyceraldehyde 3-phosphate is bound at residue arginine 163. D-ribose 5-phosphate-binding positions include glycine 212 and 233-234 (GS).

Belongs to the PdxS/SNZ family. In the presence of PdxT, forms a dodecamer of heterodimers.

The enzyme catalyses aldehydo-D-ribose 5-phosphate + D-glyceraldehyde 3-phosphate + L-glutamine = pyridoxal 5'-phosphate + L-glutamate + phosphate + 3 H2O + H(+). It functions in the pathway cofactor biosynthesis; pyridoxal 5'-phosphate biosynthesis. Its function is as follows. Catalyzes the formation of pyridoxal 5'-phosphate from ribose 5-phosphate (RBP), glyceraldehyde 3-phosphate (G3P) and ammonia. The ammonia is provided by the PdxT subunit. Can also use ribulose 5-phosphate and dihydroxyacetone phosphate as substrates, resulting from enzyme-catalyzed isomerization of RBP and G3P, respectively. The sequence is that of Pyridoxal 5'-phosphate synthase subunit PdxS from Caldanaerobacter subterraneus subsp. tengcongensis (strain DSM 15242 / JCM 11007 / NBRC 100824 / MB4) (Thermoanaerobacter tengcongensis).